The chain runs to 174 residues: Large ribosomal subunit protein uL18 (174 aa).

This sequence belongs to the universal ribosomal protein uL18 family. As to quaternary structure, part of the 50S ribosomal subunit. Contacts the 5S and 23S rRNAs.

Functionally, this is one of the proteins that bind and probably mediate the attachment of the 5S RNA into the large ribosomal subunit, where it forms part of the central protuberance. The polypeptide is Large ribosomal subunit protein uL18 (Methanosarcina acetivorans (strain ATCC 35395 / DSM 2834 / JCM 12185 / C2A)).